Here is a 351-residue protein sequence, read N- to C-terminus: Biotin synthase (351 aa).

Residues 58–285 (NTVQLSTLLS…RAMVRLSAGR (228 aa)) enclose the Radical SAM core domain. Residues Cys73, Cys77, and Cys80 each contribute to the [4Fe-4S] cluster site. [2Fe-2S] cluster contacts are provided by Cys117, Cys148, Cys208, and Arg280.

Belongs to the radical SAM superfamily. Biotin synthase family. In terms of assembly, homodimer. It depends on [4Fe-4S] cluster as a cofactor. Requires [2Fe-2S] cluster as cofactor.

It catalyses the reaction (4R,5S)-dethiobiotin + (sulfur carrier)-SH + 2 reduced [2Fe-2S]-[ferredoxin] + 2 S-adenosyl-L-methionine = (sulfur carrier)-H + biotin + 2 5'-deoxyadenosine + 2 L-methionine + 2 oxidized [2Fe-2S]-[ferredoxin]. It participates in cofactor biosynthesis; biotin biosynthesis; biotin from 7,8-diaminononanoate: step 2/2. Catalyzes the conversion of dethiobiotin (DTB) to biotin by the insertion of a sulfur atom into dethiobiotin via a radical-based mechanism. The chain is Biotin synthase from Paraburkholderia phymatum (strain DSM 17167 / CIP 108236 / LMG 21445 / STM815) (Burkholderia phymatum).